We begin with the raw amino-acid sequence, 610 residues long: Transducer of Cdc42-dependent actin assembly protein 2 homolog (610 aa).

An F-BAR domain is found at 1-267 (MIPVSRFFTV…EVGKIDAEGD (267 aa)). The tract at residues 283–315 (APFEIEDLGDPKNCDSRTNDSADGSGGKLLKSS) is disordered. Basic and acidic residues predominate over residues 291 to 302 (GDPKNCDSRTND). One can recognise an REM-1 domain in the interval 352 to 429 (SKPAHVRLSC…IHNLKEFYAM (78 aa)). The stretch at 355 to 385 (AHVRLSCLRSKIRDMEKQLEQAIQGREGITR) forms a coiled coil. Disordered stretches follow at residues 436-487 (EGQE…SSKN) and 499-519 (LISS…RRAE). The segment covering 437 to 449 (GQERSFGGRDTPD) has biased composition (basic and acidic residues). Residues 453–464 (SMSGSSTNQSSS) are compositionally biased toward low complexity. The segment covering 475–487 (AGNSSSADDSSKN) has biased composition (polar residues). Over residues 501-513 (SSPKTSKSSTPTP) the composition is skewed to low complexity. Residues 547-610 (ETAVTVTALF…VPTSYLQFPQ (64 aa)) enclose the SH3 domain.

The protein belongs to the FNBP1 family. Interacts (via SH3 domain) with wsp-1 and abi-1. Interacts with cdc-42 and (via SH3 domain) with wve-1.

It localises to the cell junction. The protein resides in the cell membrane. The protein localises to the cytoplasmic vesicle. Its subcellular location is the cytoplasm. It is found in the recycling endosome. In terms of biological role, plays a role in protein trafficking, actin organization and embryonic morphogenesis. Potentially acts as a cdc-42 effector. May play a role in egg laying. Together with toca-1, is required for protein trafficking regulating yolk protein clathrin-mediated endocytosis by oocytes during oogenesis and retrograde recycling and the sorting of recycling endosome cargo proteins such as mig-14. Also, together with toca-2, controls the distribution of actin at cell junctions. This Caenorhabditis elegans protein is Transducer of Cdc42-dependent actin assembly protein 2 homolog.